The primary structure comprises 240 residues: MKKTVEVLPDQTALIARSLDLILTKLDTAIKQQGRFTIALSGGSTPKPLYEAIAAQKLPWDKIHVFWGDERYVSPDHPDSNELMARTAWLDRVDIPAENIHAVPTLDNNPAVSAAKYEQHLQTFFNSAPGEFPALDVVLLGMGDDAHTASLFPHTEALQVRDRLITVGNKDGNPRITFTYPFINAASSVIFVVAGANKRPALAQVFAPSADDLAYPSRFIQPQGELLWLLDAAAGAELSV.

It belongs to the glucosamine/galactosamine-6-phosphate isomerase family. 6-phosphogluconolactonase subfamily.

It catalyses the reaction 6-phospho-D-glucono-1,5-lactone + H2O = 6-phospho-D-gluconate + H(+). It functions in the pathway carbohydrate degradation; pentose phosphate pathway; D-ribulose 5-phosphate from D-glucose 6-phosphate (oxidative stage): step 2/3. Hydrolysis of 6-phosphogluconolactone to 6-phosphogluconate. This chain is 6-phosphogluconolactonase (pgl), found in Nostoc sp. (strain PCC 7120 / SAG 25.82 / UTEX 2576).